We begin with the raw amino-acid sequence, 467 residues long: MAAASRARVAYLLRQLQRAACQCPTHSHTYSQAPGLSPSGKTTDYAFEMAVSNIRYGAGVTKEVGMDLQNMGAKNVCLMTDKNLSKLPPVQVAMDSLVKNGIPFTVYDNVRVEPTDASFMEAIEFAQKGAFDAYVAVGGGSTMDTCMAANLYASSPHSDFLDYVSAPIGKGKPVSVPLKPLIAVPTTSGTGSETTGVAIFDYEHLKVKIGIASRAIKPTLGLIDPLHTLHMPARVVANSGFDVLCHALESYTTLPYHLRSPCPSNPITRPAYQGSNPISDIWAIHALRIVAKYLKRAVRNPDDLEARSHMHLASAFAGIGFGNAGVHLCHGMSYPISGLVKTYKAKDYNVDHPLVPHGLSVVLTSPAVFTFTAQMFPERHLETAEILGADTRTARIQDAGLVLADTLRKFLFDLDVDDGLAAVGYSKADIPALVKGTLPQERVTKLAPRPQSEEDLAALFEASMKLY.

Lysine 445 carries the post-translational modification N6-acetyllysine. Serine 452 carries the post-translational modification Phosphoserine.

This sequence belongs to the iron-containing alcohol dehydrogenase family. Hydroxyacid-oxoacid transhydrogenase subfamily.

The protein localises to the mitochondrion. It carries out the reaction (S)-3-hydroxybutanoate + 2-oxoglutarate = (R)-2-hydroxyglutarate + acetoacetate. The catalysed reaction is 4-hydroxybutanoate + 2-oxoglutarate = (R)-2-hydroxyglutarate + succinate semialdehyde. Catalyzes the cofactor-independent reversible oxidation of gamma-hydroxybutyrate (GHB) to succinic semialdehyde (SSA) coupled to reduction of 2-ketoglutarate (2-KG) to D-2-hydroxyglutarate (D-2-HG). L-3-hydroxybutyrate (L-3-OHB) is also a substrate for HOT when using 2-KG as hydrogen acceptor, resulting in the formation of D-2-HG. The protein is Hydroxyacid-oxoacid transhydrogenase, mitochondrial (ADHFE1) of Pongo abelii (Sumatran orangutan).